Here is a 167-residue protein sequence, read N- to C-terminus: Large ribosomal subunit protein uL10 (167 aa).

Belongs to the universal ribosomal protein uL10 family. Part of the ribosomal stalk of the 50S ribosomal subunit. The N-terminus interacts with L11 and the large rRNA to form the base of the stalk. The C-terminus forms an elongated spine to which L12 dimers bind in a sequential fashion forming a multimeric L10(L12)X complex.

In terms of biological role, forms part of the ribosomal stalk, playing a central role in the interaction of the ribosome with GTP-bound translation factors. This is Large ribosomal subunit protein uL10 from Alkaliphilus oremlandii (strain OhILAs) (Clostridium oremlandii (strain OhILAs)).